A 100-amino-acid chain; its full sequence is UPF0213 protein YhbQ (100 aa).

In terms of domain architecture, GIY-YIG spans 2–77; the sequence is TPWYLYLIRT…KQLTKRQKER (76 aa).

Belongs to the UPF0213 family.

In Salmonella arizonae (strain ATCC BAA-731 / CDC346-86 / RSK2980), this protein is UPF0213 protein YhbQ.